The chain runs to 566 residues: Arginine--tRNA ligase (566 aa).

Residues 123-133 carry the 'HIGH' region motif; the sequence is PNIAKPFHIGH.

The protein belongs to the class-I aminoacyl-tRNA synthetase family. As to quaternary structure, monomer.

The protein resides in the cytoplasm. The enzyme catalyses tRNA(Arg) + L-arginine + ATP = L-arginyl-tRNA(Arg) + AMP + diphosphate. The protein is Arginine--tRNA ligase of Halothermothrix orenii (strain H 168 / OCM 544 / DSM 9562).